Here is a 188-residue protein sequence, read N- to C-terminus: Elongation factor P-like protein (188 aa).

This sequence belongs to the elongation factor P family.

This is Elongation factor P-like protein from Aliivibrio fischeri (strain MJ11) (Vibrio fischeri).